A 288-amino-acid chain; its full sequence is Ankyrin repeat and SOCS box protein 8 (288 aa).

Ser-17 is subject to Phosphoserine. 4 ANK repeats span residues 52-81 (GTLK…EVNA), 85-113 (YNRT…NPNA), 117-146 (NRDT…SVNA), and 150-179 (NNDT…EVRV). The SOCS box domain maps to 235 to 288 (QLCEKLTVLCSAPGTLKTLSRYAVRRSLGLQYLPDAVKGLPLPASLKEYLLLIE).

This sequence belongs to the ankyrin SOCS box (ASB) family. In terms of assembly, interacts with TBK1; this interaction promotes TBK1 proteasomal degradation. In terms of processing, phosphorylated by TBK1.

It localises to the cytoplasm. It participates in protein modification; protein ubiquitination. In terms of biological role, may be a substrate-recognition component of a SCF-like ECS (Elongin-Cullin-SOCS-box protein) E3 ubiquitin-protein ligase complex which mediates the ubiquitination and subsequent proteasomal degradation of target proteins. Inhibits IFN-beta production through the IRF3 signaling pathway by targeting TBK1 via 'Lys-48'-linked ubiquitination, leading to its proteasomal degradation. This is Ankyrin repeat and SOCS box protein 8 (ASB8) from Bos taurus (Bovine).